We begin with the raw amino-acid sequence, 101 residues long: A-type ATP synthase subunit K (101 aa).

3 helical membrane-spanning segments follow: residues 5 to 25 (WLPFLLLPLLVSATIFSAQAP), 37 to 57 (IGAGLAIGLAAIGAGVAVGMA), and 75 to 95 (ILIFVAIGEGIAVYGILFAVL).

The protein belongs to the V-ATPase proteolipid subunit family. Has multiple subunits with at least A(3), B(3), C, D, E, F, H, I and proteolipid K(x). Post-translationally, the N-terminus is blocked.

Its subcellular location is the cell membrane. Component of the A-type ATP synthase that produces ATP from ADP in the presence of a proton gradient across the membrane. In Sulfurisphaera tokodaii (strain DSM 16993 / JCM 10545 / NBRC 100140 / 7) (Sulfolobus tokodaii), this protein is A-type ATP synthase subunit K.